A 22-amino-acid chain; its full sequence is Caerin-3.2 (22 aa).

Lys22 bears the Lysine amide mark.

As to expression, expressed by the skin parotoid and/or rostral glands.

The protein localises to the secreted. In terms of biological role, antibacterial peptide, that adopts an alpha helical conformation which can disrupt bacterial membranes. Each caerin displays a different antimicrobial specificity. The chain is Caerin-3.2 from Ranoidea caerulea (Green tree frog).